We begin with the raw amino-acid sequence, 422 residues long: UDP-N-acetylglucosamine 1-carboxyvinyltransferase (422 aa).

Phosphoenolpyruvate is bound at residue 22-23 (KN). UDP-N-acetyl-alpha-D-glucosamine is bound at residue Arg-95. Residue Cys-119 is the Proton donor of the active site. Cys-119 bears the 2-(S-cysteinyl)pyruvic acid O-phosphothioketal mark. Residues 124-128 (RPIDQ), Asp-309, and Val-331 contribute to the UDP-N-acetyl-alpha-D-glucosamine site.

This sequence belongs to the EPSP synthase family. MurA subfamily.

It is found in the cytoplasm. It carries out the reaction phosphoenolpyruvate + UDP-N-acetyl-alpha-D-glucosamine = UDP-N-acetyl-3-O-(1-carboxyvinyl)-alpha-D-glucosamine + phosphate. It functions in the pathway cell wall biogenesis; peptidoglycan biosynthesis. Cell wall formation. Adds enolpyruvyl to UDP-N-acetylglucosamine. This Anaeromyxobacter dehalogenans (strain 2CP-C) protein is UDP-N-acetylglucosamine 1-carboxyvinyltransferase.